The chain runs to 578 residues: Proline--tRNA ligase (578 aa).

This sequence belongs to the class-II aminoacyl-tRNA synthetase family. ProS type 1 subfamily. Homodimer.

Its subcellular location is the cytoplasm. It catalyses the reaction tRNA(Pro) + L-proline + ATP = L-prolyl-tRNA(Pro) + AMP + diphosphate. Its function is as follows. Catalyzes the attachment of proline to tRNA(Pro) in a two-step reaction: proline is first activated by ATP to form Pro-AMP and then transferred to the acceptor end of tRNA(Pro). As ProRS can inadvertently accommodate and process non-cognate amino acids such as alanine and cysteine, to avoid such errors it has two additional distinct editing activities against alanine. One activity is designated as 'pretransfer' editing and involves the tRNA(Pro)-independent hydrolysis of activated Ala-AMP. The other activity is designated 'posttransfer' editing and involves deacylation of mischarged Ala-tRNA(Pro). The misacylated Cys-tRNA(Pro) is not edited by ProRS. This chain is Proline--tRNA ligase, found in Burkholderia cenocepacia (strain ATCC BAA-245 / DSM 16553 / LMG 16656 / NCTC 13227 / J2315 / CF5610) (Burkholderia cepacia (strain J2315)).